An 88-amino-acid chain; its full sequence is Synaptonemal complex central element protein 3 (88 aa).

Residues 8-75 adopt a coiled-coil conformation; that stretch reads ERSYDNMLKM…FLNCKEEMEK (68 aa).

As to quaternary structure, homodimer. Can form higher-order homooligomers. Interacts with SYCP1 (via tetrameric core); the interaction remodels SYCP1 homotetramers to 2:1 heterotrimers with SYCE3. SYCP1/SYCE3 heterotrimers form lattice assemblies as part of the mature synaptonemal complex via both lateral and head-to-head interactions. Interacts with the SYCE1-SIX6OS1 complex; the interaction recruits the SYCE1-SIX6OS1 complex to the central element of the synaptonemal complex. Interacts with the SYCE2-TEX12 complex; the interaction promotes fibrous assembly of SYCE2-TEX12 as part of the synaptonemal complex central element. Interacts with SYCE1. Interacts with SYCE2. Interacts with proteasome subunit PSMA8; to participate in meiosis progression during spermatogenesis. Interacts with SPO16. Expression is restricted to spermatocytes and is absent in spermatogonia, spermatids and spermatogonia (at protein level). Expressed in adult testis and embryonic ovary. Expressed in the convoluted seminiferous tubules in spermatogonia and spermatocytes.

Its subcellular location is the nucleus. The protein resides in the chromosome. In terms of biological role, major component of the transverse central element of synaptonemal complexes (SCS), formed between homologous chromosomes during meiotic prophase. Required for the assembly of the central element of the synaptonemal complex during meiosis, via remodeling of SYCP1 lattice structures and promoting recruitment of SYCE2-TEX12 and SYCE1-SIX60S1 complexes. Required for chromosome loading of the central element-specific SCS proteins, and for initiating synapsis between homologous chromosomes. Chromosome loading appears to require SYCP1. Required for fertility and normal testis development. May play a role in apoptosis of spermatogenic cells and pathogenesis of cryptorchidism. This Mus musculus (Mouse) protein is Synaptonemal complex central element protein 3.